Here is a 482-residue protein sequence, read N- to C-terminus: MVTTMDPSRISRIVAVVFVLVIQVVSGNFVFNVTHKFAGKEKQLSELKSHDSFRHARMLANIDLPLGGDSRADSIGLYFTKIKLGSPPKEYYVQVDTGSDILWVNCAPCPKCPVKTDLGIPLSLYDSKTSSTSKNVGCEDDFCSFIMQSETCGAKKPCSYHVVYGDGSTSDGDFIKDNITLEQVTGNLRTAPLAQEVVFGCGKNQSGQLGQTDSAVDGIMGFGQSNTSIISQLAAGGSTKRIFSHCLDNMNGGGIFAVGEVESPVVKTTPIVPNQVHYNVILKGMDVDGDPIDLPPSLASTNGDGGTIIDSGTTLAYLPQNLYNSLIEKITAKQQVKLHMVQETFACFSFTSNTDKAFPVVNLHFEDSLKLSVYPHDYLFSLREDMYCFGWQSGGMTTQDGADVILLGDLVLSNKLVVYDLENEVIGWADHNCSSSIKVKDGSGAAYQLGAENLISAASSVMNGTLVTLLSILIWVFHSFTS.

Positions 1-27 (MVTTMDPSRISRIVAVVFVLVIQVVSG) are cleaved as a signal peptide. A glycan (N-linked (GlcNAc...) asparagine) is linked at Asn32. In terms of domain architecture, Peptidase A1 spans 78–429 (YFTKIKLGSP…DLENEVIGWA (352 aa)). The active site involves Asp96. N-linked (GlcNAc...) asparagine glycans are attached at residues Asn178, Asn204, and Asn226. Residue Asp310 is part of the active site. Cys347 and Cys388 are joined by a disulfide. A glycan (N-linked (GlcNAc...) asparagine) is linked at Asn432. Residue Ser456 is the site of GPI-anchor amidated serine attachment. The propeptide at 457-482 (AASSVMNGTLVTLLSILIWVFHSFTS) is removed in mature form. Asn463 is a glycosylation site (N-linked (GlcNAc...) asparagine).

The protein belongs to the peptidase A1 family. Highly expressed in pollen and pollen tubes. Mostly expressed in roots, flowers and inflorescence, and at lower levels in stems, seedlings and siliques.

The protein localises to the cell membrane. It is found in the cytoplasm. It localises to the cytosol. Its function is as follows. Displays aspartic proteolytic activity. Together with A39, contributes to pollen and ovule development, including the apical cell wall constitution of the growing pollen tubes. The chain is Aspartic proteinase 36 from Arabidopsis thaliana (Mouse-ear cress).